The chain runs to 199 residues: Prostatic spermine-binding protein (199 aa).

Positions 1-18 (MLLLLTLAFLASPTCRAQ) are cleaved as a signal peptide. The Jacalin-type lectin domain maps to 19–151 (NVLGNAAGKY…VRGIGFKWGN (133 aa)). An N-linked (GlcNAc...) asparagine glycan is attached at asparagine 62. The tract at residues 159–199 (HYNNKEDKADNKDADNKDADNKDDGDEDDDGNDDDDQKDES) is disordered. Residues 160 to 180 (YNNKEDKADNKDADNKDADNK) show a composition bias toward basic and acidic residues. The span at 181–199 (DDGDEDDDGNDDDDQKDES) shows a compositional bias: acidic residues.

This sequence to rat SBP. As to expression, prostate.

This protein seems to be functional equivalent to rat prostatic spermine-binding protein, which is involved in polyamine binding. The chain is Prostatic spermine-binding protein (Sbp) from Mus musculus (Mouse).